The primary structure comprises 69 residues: U2-agatoxin-Ao1o (69 aa).

A signal peptide spans 1–20 (MKAIISLLLISAMVFSMFEA). The propeptide occupies 21–34 (VPVRRRFTAFEGER). Cystine bridges form between Cys36–Cys52, Cys43–Cys57, and Cys51–Cys67. Position 68 is a leucine amide (Leu68).

Belongs to the neurotoxin 01 (U2-agtx) family. In terms of tissue distribution, expressed by the venom gland.

The protein localises to the secreted. Functionally, insect active toxin causing rapid but reversible paralysis in crickets. No activity shown in mammals. Does not show effect on mammalian voltage-gated calcium channels. The chain is U2-agatoxin-Ao1o from Agelena orientalis (Funnel-web spider).